A 107-amino-acid chain; its full sequence is MRLLILTLSLITLAGCTVTRQAHVSEVDAATGIVRLVYDQAFLQHAHTDRYVSRGIADRACQQEGYTHAVPFGQPVGNCSLFAGSLCLNTEFTLSYQCHHSAFPVFL.

This is an uncharacterized protein from Escherichia coli (strain K12).